The primary structure comprises 464 residues: Protein ABHD18 (464 aa).

The N-terminal stretch at methionine 1–glycine 24 is a signal peptide. Asparagine 341 carries an N-linked (GlcNAc...) asparagine glycan.

Belongs to the AB hydrolase superfamily.

It localises to the secreted. This chain is Protein ABHD18, found in Rattus norvegicus (Rat).